A 413-amino-acid chain; its full sequence is Serine hydroxymethyltransferase (413 aa).

Residues leucine 119 and 123–125 (GHL) each bind (6S)-5,6,7,8-tetrahydrofolate. An N6-(pyridoxal phosphate)lysine modification is found at lysine 228. Position 243 (glutamate 243) interacts with (6S)-5,6,7,8-tetrahydrofolate.

This sequence belongs to the SHMT family. In terms of assembly, homodimer. Pyridoxal 5'-phosphate is required as a cofactor.

It is found in the cytoplasm. It catalyses the reaction (6R)-5,10-methylene-5,6,7,8-tetrahydrofolate + glycine + H2O = (6S)-5,6,7,8-tetrahydrofolate + L-serine. Its pathway is one-carbon metabolism; tetrahydrofolate interconversion. It functions in the pathway amino-acid biosynthesis; glycine biosynthesis; glycine from L-serine: step 1/1. Catalyzes the reversible interconversion of serine and glycine with tetrahydrofolate (THF) serving as the one-carbon carrier. This reaction serves as the major source of one-carbon groups required for the biosynthesis of purines, thymidylate, methionine, and other important biomolecules. Also exhibits THF-independent aldolase activity toward beta-hydroxyamino acids, producing glycine and aldehydes, via a retro-aldol mechanism. This is Serine hydroxymethyltransferase from Desulforamulus reducens (strain ATCC BAA-1160 / DSM 100696 / MI-1) (Desulfotomaculum reducens).